A 1861-amino-acid polypeptide reads, in one-letter code: Golgi-specific brefeldin A-resistance guanine nucleotide exchange factor 1 (1861 aa).

Residues 1–211 form a DCB; DCB:DCB domain and DCB:HUS domain interaction region; it reads MVDKNIYIIQ…EPKSYVGTNM (211 aa). Positions 1 to 380 are interaction with RAB1B; the sequence is MVDKNIYIIQ…SVHDMDYVNP (380 aa). Disordered stretches follow at residues 210 to 264 and 289 to 353; these read NMKK…LTGG and CTDS…VESI. Basic residues predominate over residues 227–241; it reads WKKQKRSPRPPRHTT. Residues 253–262 show a composition bias toward polar residues; it reads NGATLPSNLT. Phosphoserine occurs at positions 349 and 352. Position 507 is a phosphothreonine (Thr-507). Positions 530–550 are HUS; DCB:HUS domain interaction; the sequence is RIPSFVTELYINYDCDYYCSN. Residues 603 to 634 form a disordered region; that stretch reads QEKKETARPGFEAVDGNPETNKSERATSDGKS. Residues 692–882 form the SEC7 domain; sequence ELIEIKNKKK…EDMYHAIKNE (191 aa). Positions 886–1372 are phosphatidylinositol-phosphate binding; required for translocation to the leading edge and for ARF1 activation upon GPCR signaling; the sequence is MPEEQTGLVR…LSRPGPSPLV (487 aa). Low complexity predominate over residues 1286-1296; that stretch reads TARADAPDAGA. The interval 1286–1335 is disordered; it reads TARADAPDAGAQSDSELPSYHQNDVSLDRGYTSDSEVYTDHGRPGKIHRS. A compositionally biased stretch (polar residues) spans 1297 to 1310; the sequence is QSDSELPSYHQNDV. Position 1298 is a phosphoserine (Ser-1298). Tyr-1316 is modified (phosphotyrosine). Residues Ser-1318, Ser-1320, and Ser-1335 each carry the phosphoserine modification. Position 1337 is a phosphothreonine (Thr-1337). Disordered regions lie at residues 1431 to 1486 and 1727 to 1812; these read GCKS…EGVP and PMPA…PLIL. Residues 1434–1448 are compositionally biased toward basic and acidic residues; that stretch reads SQDKRSKSHKYDSKG. Ser-1477, Ser-1775, and Ser-1786 each carry phosphoserine. Residues 1776 to 1793 show a composition bias toward low complexity; that stretch reads TRAPSSSSPGSPMASSPS.

In terms of assembly, can form homodimers and probably homotetramers. Interacts with COPG1; the interaction is independent on ARF1 activation. Interacts with ARF1, ARF3, ARF4 and ARF5. Interacts with RAB1B (GTP-bound form); required for GBF1 membrane association. Interacts with GGA1, GGA2 and GGA3. Interacts with USO1. Interacts (via SEC7 domain) with PNPLA2 (via C-terminus); the interaction is direct. Interacts with ARMH3.

The protein localises to the golgi apparatus. Its subcellular location is the cis-Golgi network. It is found in the endoplasmic reticulum-Golgi intermediate compartment. The protein resides in the trans-Golgi network. It localises to the cytoplasm. The protein localises to the lipid droplet. Its subcellular location is the membrane. Its function is as follows. Guanine-nucleotide exchange factor (GEF) for members of the Arf family of small GTPases involved in trafficking in the early secretory pathway; its GEF activity initiates the coating of nascent vesicles via the localized generation of activated ARFs through replacement of GDP with GTP. Recruitment to cis-Golgi membranes requires membrane association of Arf-GDP and can be regulated by ARF1, ARF3, ARF4 and ARF5. Involved in the recruitment of the COPI coat complex to the endoplasmic reticulum exit sites (ERES), and the endoplasmic reticulum-Golgi intermediate (ERGIC) and cis-Golgi compartments which implicates ARF1 activation. Involved in COPI vesicle-dependent retrograde transport from the ERGIC and cis-Golgi compartments to the endoplasmic reticulum (ER). Involved in the trans-Golgi network recruitment of GGA1, GGA2, GGA3, BIG1, BIG2, and the AP-1 adaptor protein complex related to chlathrin-dependent transport; the function requires its GEF activity (probably at least in part on ARF4 and ARF5). Has GEF activity towards ARF1. Has in vitro GEF activity towards ARF5. Involved in the processing of PSAP. Required for the assembly of the Golgi apparatus. The AMPK-phosphorylated form is involved in Golgi disassembly during mitotis and under stress conditions. May be involved in the COPI vesicle-dependent recruitment of PNPLA2 to lipid droplets; however, this function is under debate. In neutrophils, involved in G protein-coupled receptor (GPCR)-mediated chemotaxis und superoxide production. Proposed to be recruited by phosphatidylinositol-phosphates generated upon GPCR stimulation to the leading edge where it recruits and activates ARF1, and is involved in recruitment of GIT2 and the NADPH oxidase complex. Plays a role in maintaining mitochondrial morphology. The polypeptide is Golgi-specific brefeldin A-resistance guanine nucleotide exchange factor 1 (Mus musculus (Mouse)).